Here is a 994-residue protein sequence, read N- to C-terminus: ASI1-immunoprecipitated protein 2 (994 aa).

Disordered regions lie at residues 39 to 182 (AEFS…SGEN) and 187 to 206 (KADESNTSAMSDSESENDPE). Basic and acidic residues predominate over residues 45–54 (KSDESSDENS). Polar residues predominate over residues 60–102 (SQCSFNGDNLLRSSGVNAPGSSHNTSSEASHLVNSNHDTSSEN). Composition is skewed to basic and acidic residues over residues 119-140 (LLDRPHKDQDSMKVDSCNDHQA) and 148-163 (KVKEKSGAKNNEEKKN). A PHD-type zinc finger spans residues 212 to 263 (VKVCDTCGDAGREDLLAICSRCSDGAEHTYCMRVMLKKVPKGYWLCEECKFA). Zn(2+)-binding residues include Cys215, Cys218, Cys230, Cys233, His239, Cys242, Cys257, and Cys260. 2 disordered regions span residues 342–567 (AHYS…NNKG) and 839–875 (CSNPPKNTPLPASCVSPNRDTFRHENPSNKKSLTDRT). Residues 371–384 (SFLKSNSFNSLSSR) are compositionally biased toward low complexity. Polar residues-rich tracts occupy residues 417–435 (VGKSMSSRCIDVGSSNCND) and 449–464 (TEANPSASISRGNSSI). Basic and acidic residues-rich tracts occupy residues 469–478 (SPRDLKDLQS), 536–552 (PRSREFREAGEKTKDAV), and 858–875 (DTFRHENPSNKKSLTDRT).

In terms of assembly, component of the ASI1-AIPP1-EDM2 (AAE) RNA regulatory complex composed of at least AIPP1/EDM3, ASI1 and EDM2 and may contain CPL2, AIPP2 and AIPP3/BDT1. Part of the BAH-PHD bivalent histone reader complex that contains AIPP2, PAIPP2 and AIPP3/BDT1; the BAH-PHD module associates with CPL2 to form the BAH-PHD-CPL2 complex (BPC) for transcriptional repression. Binds directly to ASI1, AIPP3/BDT1 and CPL2 but not to PAIPP2. Expressed ubiquitously.

Functionally, together with AIPP3/BDT1 and PAIPP2, cooperates to form a BAH-PHD bivalent histone reader complex able to read histone H3 lysine 27 trimethylation (H3K27me3) and low-methylated H3K4 histone marks in order to regulate transcription, especially to prevent early flowering; promotes AIPP3/BDT1 binding to H3K27me3. CPL2 is subsequently recruited to form a BAH-PHD-CPL2 complex (BPC) in order to silence several H3K27me3 and low-methylated H3K4 enriched loci, including AGO5, via the phosphorylation state-dependent inhibition of Pol II release from the transcriptional start site (e.g. Ser5P-Pol II dephosphorylation). The BPC complex represses flowering by inhibiting the expression of several genes, including AGL6, FT, FUL and SOC1. Prevents the accumulation of intronic heterochromatin-containing genes (e.g. IBM1, At3g05410 and RPP7). This Arabidopsis thaliana (Mouse-ear cress) protein is ASI1-immunoprecipitated protein 2.